Reading from the N-terminus, the 298-residue chain is ATP phosphoribosyltransferase (298 aa).

It belongs to the ATP phosphoribosyltransferase family. Long subfamily. Mg(2+) serves as cofactor.

The protein resides in the cytoplasm. It catalyses the reaction 1-(5-phospho-beta-D-ribosyl)-ATP + diphosphate = 5-phospho-alpha-D-ribose 1-diphosphate + ATP. The protein operates within amino-acid biosynthesis; L-histidine biosynthesis; L-histidine from 5-phospho-alpha-D-ribose 1-diphosphate: step 1/9. Its activity is regulated as follows. Feedback inhibited by histidine. Its function is as follows. Catalyzes the condensation of ATP and 5-phosphoribose 1-diphosphate to form N'-(5'-phosphoribosyl)-ATP (PR-ATP). Has a crucial role in the pathway because the rate of histidine biosynthesis seems to be controlled primarily by regulation of HisG enzymatic activity. In Psychromonas ingrahamii (strain DSM 17664 / CCUG 51855 / 37), this protein is ATP phosphoribosyltransferase.